The chain runs to 134 residues: Small ribosomal subunit protein uS8 (134 aa).

The protein belongs to the universal ribosomal protein uS8 family. In terms of assembly, part of the 30S ribosomal subunit. Contacts proteins S5 and S12.

Its function is as follows. One of the primary rRNA binding proteins, it binds directly to 16S rRNA central domain where it helps coordinate assembly of the platform of the 30S subunit. In Thermotoga maritima (strain ATCC 43589 / DSM 3109 / JCM 10099 / NBRC 100826 / MSB8), this protein is Small ribosomal subunit protein uS8.